The chain runs to 706 residues: Fatty acid oxidation complex subunit alpha (706 aa).

Residues 1–188 form an enoyl-CoA hydratase region; it reads MEKTFNLTRR…KMGLVNDVVP (188 aa). Positions 308–706 are 3-hydroxyacyl-CoA dehydrogenase; the sequence is RKVKKAVILG…TMARENVSFF (399 aa).

This sequence in the N-terminal section; belongs to the enoyl-CoA hydratase/isomerase family. In the central section; belongs to the 3-hydroxyacyl-CoA dehydrogenase family. Heterotetramer of two alpha chains (FadJ) and two beta chains (FadI).

It is found in the cytoplasm. The catalysed reaction is a (3S)-3-hydroxyacyl-CoA = a (2E)-enoyl-CoA + H2O. It carries out the reaction a 4-saturated-(3S)-3-hydroxyacyl-CoA = a (3E)-enoyl-CoA + H2O. It catalyses the reaction a (3S)-3-hydroxyacyl-CoA + NAD(+) = a 3-oxoacyl-CoA + NADH + H(+). The enzyme catalyses (3S)-3-hydroxybutanoyl-CoA = (3R)-3-hydroxybutanoyl-CoA. It participates in lipid metabolism; fatty acid beta-oxidation. Catalyzes the formation of a hydroxyacyl-CoA by addition of water on enoyl-CoA. Also exhibits 3-hydroxyacyl-CoA epimerase and 3-hydroxyacyl-CoA dehydrogenase activities. In Shewanella putrefaciens (strain CN-32 / ATCC BAA-453), this protein is Fatty acid oxidation complex subunit alpha.